The sequence spans 377 residues: MWTPSRRQLCLAFLLVCVLSAGSFFFHLNGGNFFRNGLTLSVLCSDYHLLKSPVAMVCLPHPLQTSNGSPSCPEQSSSLSGTWTITPGGRFGNQMGQYATLLALAQLNGRQAFIQPEMHAALAPVFRISLPVLDPEVDSLTPWQHLVLHDWMSEEYSHLEDPFLKLSGFPCSWTFFHHLREQIRREFTLHNHLREGAQYLLSGLRIGPAGIRPHTFVGVHVRRGDYLEVMPNRWKGVVGDRAYLQQAMDWFRARHKDPIFVVTSNGMKWCLENIDTSHGDVVFAGNGQEGTPGKDFALLTQCNHTIMTIGTFGFWAAYLAGGDTVYLANFTLPDSEFLKIFRPEAAFLPEWVGINADLSPLQAQFDPWKPDSLFRLV.

Over 1-8 the chain is Cytoplasmic; the sequence is MWTPSRRQ. A helical; Signal-anchor for type II membrane protein transmembrane segment spans residues 9–26; it reads LCLAFLLVCVLSAGSFFF. Residues 27–377 are Lumenal-facing; sequence HLNGGNFFRN…WKPDSLFRLV (351 aa). N-linked (GlcNAc...) asparagine glycans are attached at residues Asn-67, Asn-303, and Asn-329.

Belongs to the glycosyltransferase 11 family. In terms of tissue distribution, in the adult, highly expressed in pancreas, testis and epididymis and to a lesser extent in thymus, lung, stomach, small intestine, colon, spleen and uterus. Not expressed in brain, heart, skeletal muscle, kidney, liver and bone marrow. Expressed in epididymis and testis.

The protein resides in the golgi apparatus. It localises to the golgi stack membrane. The enzyme catalyses a beta-D-galactosyl-(1-&gt;4)-N-acetyl-beta-D-glucosaminyl derivative + GDP-beta-L-fucose = an alpha-L-Fuc-(1-&gt;2)-beta-D-Gal-(1-&gt;4)-beta-D-GlcNAc derivative + GDP + H(+). The catalysed reaction is a ganglioside GA1 + GDP-beta-L-fucose = a ganglioside Fuc-GA1 + GDP + H(+). It catalyses the reaction a beta-D-Gal-(1-&gt;3)-beta-D-GlcNAc-(1-&gt;3)-beta-D-Gal-(1-&gt;4)-beta-D-Glc-(1&lt;-&gt;1')-Cer(d18:1(4E)) + GDP-beta-L-fucose = alpha-L-fucosyl-(1-&gt;2)- beta-D-galactosyl-(1-&gt;3)-N-acetyl-beta-D-glucosaminyl-(1-&gt;3)-beta-D-galactosyl-(1-&gt;4)-beta-D-glucosyl-(1&lt;-&gt;1')-N-acylsphing-4-enine + GDP + H(+). It carries out the reaction a neolactoside nLc4Cer(d18:1(4E)) + GDP-beta-L-fucose = a neolactoside IV(2)-alpha-Fuc-nLc4Cer(d18:1(4E)) + GDP + H(+). The enzyme catalyses a ganglioside GM1 + GDP-beta-L-fucose = a ganglioside Fuc-GM1 + GDP + H(+). The catalysed reaction is beta-D-galactosyl-(1-&gt;3)-N-acetyl-D-galactosamine + GDP-beta-L-fucose = alpha-L-fucosyl-(1-&gt;2)-beta-D-galactosyl-(1-&gt;3)-N-acetyl-D-galactosamine + GDP + H(+). Its pathway is protein modification; protein glycosylation. Its function is as follows. Catalyzes the transfer of L-fucose, from a guanosine diphosphate-beta-L-fucose, to the terminal galactose residue of glycoconjugates through an alpha(1,2) linkage leading to H antigen synthesis that is an intermediate substrate in the synthesis of ABO blood group antigens. H antigen is essential for maturation of the glomerular layer of the main olfactory bulb, in cell migration and early cell-cell contacts during tumor associated angiogenesis. Preferentially fucosylates soluble lactose and to a lesser extent, fucosylates glycolipids gangliosides GA1 and GM1a. This Mus musculus (Mouse) protein is Galactoside alpha-(1,2)-fucosyltransferase 1.